Reading from the N-terminus, the 277-residue chain is PPLRGANSPGPSATPVPGPNTVPHTPRLRNTPASPAARTLENPRQAQRRNDTGKDRGTHRQRAETPSRSPVPTTNTVGRHAPAVRRQRRTQHAYGPQHSLEDPPRGPAPAVFWVCRGAAGWVCAGCVAGVCWVCRGCVGRVCQGVSRACAGCVVPGVSRACGGCAGGVWWRGVSAVCAASGCAASQERVCGLAAVISPAVPRAVVPRPRALLFVCPQGPMLPSPGNFLFSPGNHTDTDTRLLFAVRAARRFYSPSPSSAPHATSRRPHTQLQVSPPR.

2 disordered regions span residues 1–103 (PPLR…LEDP) and 254–277 (PSPSSAPHATSRRPHTQLQVSPPR). Over residues 48–65 (RRNDTGKDRGTHRQRAET) the composition is skewed to basic and acidic residues. Polar residues predominate over residues 66-77 (PSRSPVPTTNTV). A compositionally biased stretch (basic residues) spans 82–91 (PAVRRQRRTQ).

This is an uncharacterized protein from Homo sapiens (Human).